Here is a 262-residue protein sequence, read N- to C-terminus: DNA repair protein RecO (262 aa).

This sequence belongs to the RecO family.

Functionally, involved in DNA repair and RecF pathway recombination. The sequence is that of DNA repair protein RecO from Enterococcus faecalis (strain ATCC 700802 / V583).